Consider the following 270-residue polypeptide: Interleukin-1 beta (270 aa).

Residues 1 to 118 (MARVPEPTSE…KCDDNAFVHD (118 aa)) constitute a propeptide that is removed on maturation.

The protein belongs to the IL-1 family. Monomer. In its precursor form, weakly interacts with full-length MEFV; the mature cytokine does not interact at all. Interacts with integrins ITGAV:ITGBV and ITGA5:ITGB1; integrin-binding is required for IL1B signaling. Interacts with cargo receptor TMED10; the interaction is direct and is required for the secretion of IL1B mature form. Interacts with HSP90AB1; the interaction facilitates cargo translocation into the ERGIC. Interacts with HSP90B1; the interaction facilitates cargo translocation into the ERGIC.

It is found in the cytoplasm. The protein localises to the cytosol. Its subcellular location is the secreted. It localises to the lysosome. The protein resides in the extracellular exosome. Functionally, potent pro-inflammatory cytokine. Initially discovered as the major endogenous pyrogen, induces prostaglandin synthesis, neutrophil influx and activation, T-cell activation and cytokine production, B-cell activation and antibody production, and fibroblast proliferation and collagen production. Promotes Th17 differentiation of T-cells. Synergizes with IL12/interleukin-12 to induce IFNG synthesis from T-helper 1 (Th1) cells. Plays a role in angiogenesis by inducing VEGF production synergistically with TNF and IL6. Involved in transduction of inflammation downstream of pyroptosis: its mature form is specifically released in the extracellular milieu by passing through the gasdermin-D (GSDMD) pore. This chain is Interleukin-1 beta (IL1B), found in Mustela putorius furo (European domestic ferret).